A 617-amino-acid polypeptide reads, in one-letter code: Protein fem-1 homolog C (617 aa).

Methionine 1 carries the post-translational modification N-acetylmethionine. ANK repeat units lie at residues 2 to 31, 40 to 70, 82 to 111, 115 to 144, 148 to 177, 181 to 210, and 213 to 242; these read DLKTAVFNAARDGKLRLLTKLLASKSKAEV, NGATPLLMAARYGHLDMVEFLLEQCSASIEV, EGAPPLWAASAAGHLKVVQSLLNHGASVNN, TNSTPLRAACFDGHLEIVKYLVEHKADLEV, HGHTCLMISCYKGHKEIAQYLLEKGADVNR, KGNTALHDCAESGSLDIMKMLLMYCAKMEK, and YGMTPLLSASVTGHTNIVDFLTHHAQTSKT. 2 TPR repeats span residues 245–279 and 338–371; these read INALELLGATFVDKKRDLLGALKYWKKAMNMRYSD and SYYIRYRGAVYADSGNFKRCINLWKYALDMQQSN. ANK repeat units lie at residues 481-523 and 527-556; these read NNFS…DVNV and DDNSPLHIAALNNHPDIMNLLIKSGAHFDA.

This sequence belongs to the fem-1 family. Component of a Cul2-RING (CRL2) E3 ubiquitin-protein ligase complex, also named ECS (Elongin BC-CUL2/5-SOCS-box protein) complex, composed of CUL2, Elongin BC (ELOB and ELOC), RBX1 and substrate-specific adapter FEM1C. As to expression, widely expressed. Expressed at higher level in testis.

It functions in the pathway protein modification; protein ubiquitination. Substrate-recognition component of a Cul2-RING (CRL2) E3 ubiquitin-protein ligase complex of the DesCEND (destruction via C-end degrons) pathway, which recognizes a C-degron located at the extreme C terminus of target proteins, leading to their ubiquitination and degradation. The C-degron recognized by the DesCEND pathway is usually a motif of less than ten residues and can be present in full-length proteins, truncated proteins or proteolytically cleaved forms. The CRL2(FEM1C) complex specifically recognizes proteins with an arginine at the C-terminus: recognizes and binds proteins ending with -Lys/Arg-Xaa-Arg and -Lys/Arg-Xaa-Xaa-Arg C-degrons, such as SIL1 or OR51B2, leading to their ubiquitination and degradation. The CRL2(FEM1C) complex mediates ubiquitination and degradation of truncated MSRB1/SEPX1 selenoproteins produced by failed UGA/Sec decoding. Promotes ubiquitination and degradation of SLBP. In Mus musculus (Mouse), this protein is Protein fem-1 homolog C.